The chain runs to 293 residues: Ribonuclease P/MRP protein subunit RPP1 (293 aa).

This sequence belongs to the eukaryotic/archaeal RNase P protein component 3 family. In terms of assembly, component of nuclear RNase P and RNase MRP complexes. RNase P consists of an RNA moiety and at least 9 protein subunits including POP1, POP3, POP4, POP5, POP6, POP7, POP8, RPP1 and RPR2. RNase MRP complex consists of an RNA moiety and at least 10 protein subunits including POP1, POP3, POP4, POP5, POP6, POP7, POP8, RMP1, RPP1 and SNM1, many of which are shared with the RNase P complex.

It is found in the nucleus. The enzyme catalyses Endonucleolytic cleavage of RNA, removing 5'-extranucleotides from tRNA precursor.. Functionally, component of ribonuclease P, a protein complex that generates mature tRNA molecules by cleaving their 5'-ends. Also a component of RNase MRP, which cleaves pre-rRNA sequences. The polypeptide is Ribonuclease P/MRP protein subunit RPP1 (RPP1) (Saccharomyces cerevisiae (strain ATCC 204508 / S288c) (Baker's yeast)).